A 275-amino-acid polypeptide reads, in one-letter code: Thiazole synthase (275 aa).

The Schiff-base intermediate with DXP role is filled by Lys116. 1-deoxy-D-xylulose 5-phosphate-binding positions include Gly177, 203–204, and 225–226; these read AG and NT.

The protein belongs to the ThiG family. In terms of assembly, homotetramer. Forms heterodimers with either ThiH or ThiS.

It localises to the cytoplasm. The enzyme catalyses [ThiS sulfur-carrier protein]-C-terminal-Gly-aminoethanethioate + 2-iminoacetate + 1-deoxy-D-xylulose 5-phosphate = [ThiS sulfur-carrier protein]-C-terminal Gly-Gly + 2-[(2R,5Z)-2-carboxy-4-methylthiazol-5(2H)-ylidene]ethyl phosphate + 2 H2O + H(+). The protein operates within cofactor biosynthesis; thiamine diphosphate biosynthesis. Functionally, catalyzes the rearrangement of 1-deoxy-D-xylulose 5-phosphate (DXP) to produce the thiazole phosphate moiety of thiamine. Sulfur is provided by the thiocarboxylate moiety of the carrier protein ThiS. In vitro, sulfur can be provided by H(2)S. The chain is Thiazole synthase from Acaryochloris marina (strain MBIC 11017).